The following is a 690-amino-acid chain: Elongation factor G (690 aa).

Residues 8 to 282 enclose the tr-type G domain; that stretch reads EKTRNIGIMA…AVVAYMPSPL (275 aa). GTP-binding positions include 17–24, 81–85, and 135–138; these read AHIDAGKT, DTPGH, and NKMD.

The protein belongs to the TRAFAC class translation factor GTPase superfamily. Classic translation factor GTPase family. EF-G/EF-2 subfamily.

The protein localises to the cytoplasm. Catalyzes the GTP-dependent ribosomal translocation step during translation elongation. During this step, the ribosome changes from the pre-translocational (PRE) to the post-translocational (POST) state as the newly formed A-site-bound peptidyl-tRNA and P-site-bound deacylated tRNA move to the P and E sites, respectively. Catalyzes the coordinated movement of the two tRNA molecules, the mRNA and conformational changes in the ribosome. The protein is Elongation factor G of Alkaliphilus oremlandii (strain OhILAs) (Clostridium oremlandii (strain OhILAs)).